Reading from the N-terminus, the 319-residue chain is Beta-ketoacyl-[acyl-carrier-protein] synthase III (319 aa).

Active-site residues include C115 and H246. Residues 247–251 form an ACP-binding region; the sequence is QANLR. Residue N276 is part of the active site.

Belongs to the thiolase-like superfamily. FabH family. In terms of assembly, homodimer.

It is found in the cytoplasm. The enzyme catalyses malonyl-[ACP] + acetyl-CoA + H(+) = 3-oxobutanoyl-[ACP] + CO2 + CoA. It participates in lipid metabolism; fatty acid biosynthesis. Catalyzes the condensation reaction of fatty acid synthesis by the addition to an acyl acceptor of two carbons from malonyl-ACP. Catalyzes the first condensation reaction which initiates fatty acid synthesis and may therefore play a role in governing the total rate of fatty acid production. Possesses both acetoacetyl-ACP synthase and acetyl transacylase activities. Its substrate specificity determines the biosynthesis of branched-chain and/or straight-chain of fatty acids. This chain is Beta-ketoacyl-[acyl-carrier-protein] synthase III, found in Coxiella burnetii (strain RSA 493 / Nine Mile phase I).